A 388-amino-acid polypeptide reads, in one-letter code: Succinate--CoA ligase [ADP-forming] subunit beta (388 aa).

In terms of domain architecture, ATP-grasp spans 9-244; that stretch reads KQLFAEYGLP…PSQDDPREAH (236 aa). ATP contacts are provided by residues lysine 46, 53-55, glutamate 99, threonine 102, and glutamate 107; that span reads GRG. Asparagine 199 and aspartate 213 together coordinate Mg(2+). Substrate contacts are provided by residues asparagine 264 and 321–323; that span reads GIV.

This sequence belongs to the succinate/malate CoA ligase beta subunit family. In terms of assembly, heterotetramer of two alpha and two beta subunits. It depends on Mg(2+) as a cofactor.

It carries out the reaction succinate + ATP + CoA = succinyl-CoA + ADP + phosphate. The catalysed reaction is GTP + succinate + CoA = succinyl-CoA + GDP + phosphate. Its pathway is carbohydrate metabolism; tricarboxylic acid cycle; succinate from succinyl-CoA (ligase route): step 1/1. In terms of biological role, succinyl-CoA synthetase functions in the citric acid cycle (TCA), coupling the hydrolysis of succinyl-CoA to the synthesis of either ATP or GTP and thus represents the only step of substrate-level phosphorylation in the TCA. The beta subunit provides nucleotide specificity of the enzyme and binds the substrate succinate, while the binding sites for coenzyme A and phosphate are found in the alpha subunit. This Pseudomonas fluorescens (strain ATCC BAA-477 / NRRL B-23932 / Pf-5) protein is Succinate--CoA ligase [ADP-forming] subunit beta.